A 412-amino-acid polypeptide reads, in one-letter code: D-xylonate dehydratase (412 aa).

Homooctamer.

The catalysed reaction is D-xylonate = 2-dehydro-3-deoxy-D-arabinonate + H2O. Functionally, NADP-dependent D-xylose dehydrogenase involved in the degradation of D-xylose, a major component of hemicelluloses such as xylan. Catalyzes the third reaction in the xylose utilization pathway through dehydratation of D-xylonate into 2-dehydro-3-deoxy-D-xylonate. The sequence is that of D-xylonate dehydratase from Haloferax volcanii (strain ATCC 29605 / DSM 3757 / JCM 8879 / NBRC 14742 / NCIMB 2012 / VKM B-1768 / DS2) (Halobacterium volcanii).